We begin with the raw amino-acid sequence, 293 residues long: Glycine--tRNA ligase alpha subunit (293 aa).

The protein belongs to the class-II aminoacyl-tRNA synthetase family. In terms of assembly, tetramer of two alpha and two beta subunits.

It is found in the cytoplasm. The catalysed reaction is tRNA(Gly) + glycine + ATP = glycyl-tRNA(Gly) + AMP + diphosphate. This chain is Glycine--tRNA ligase alpha subunit, found in Sulfurimonas denitrificans (strain ATCC 33889 / DSM 1251) (Thiomicrospira denitrificans (strain ATCC 33889 / DSM 1251)).